A 519-amino-acid chain; its full sequence is Putative ATP-dependent RNA helicase L396 (519 aa).

A Helicase ATP-binding domain is found at 110-258; that stretch reads IKGMEEGGGG…IINWYMGPIL (149 aa). 123 to 130 is a binding site for ATP; the sequence is MGCGSGKT. The DEAH box signature appears at 211 to 214; it reads DEVH. One can recognise a Helicase C-terminal domain in the interval 317–457; the sequence is YLIQELFDMG…KQKYNIQKYY (141 aa).

Belongs to the DEAD box helicase family. DEAH subfamily.

The enzyme catalyses ATP + H2O = ADP + phosphate + H(+). This is Putative ATP-dependent RNA helicase L396 from Acanthamoeba polyphaga (Amoeba).